We begin with the raw amino-acid sequence, 391 residues long: 3-ketoacyl-CoA thiolase (391 aa).

Cysteine 95 serves as the catalytic Acyl-thioester intermediate. Active-site proton acceptor residues include histidine 347 and cysteine 377.

Belongs to the thiolase-like superfamily. Thiolase family. Heterotetramer of two alpha chains (FadB) and two beta chains (FadA).

It is found in the cytoplasm. It catalyses the reaction an acyl-CoA + acetyl-CoA = a 3-oxoacyl-CoA + CoA. It functions in the pathway lipid metabolism; fatty acid beta-oxidation. Functionally, catalyzes the final step of fatty acid oxidation in which acetyl-CoA is released and the CoA ester of a fatty acid two carbons shorter is formed. This Alcanivorax borkumensis (strain ATCC 700651 / DSM 11573 / NCIMB 13689 / SK2) protein is 3-ketoacyl-CoA thiolase.